The sequence spans 320 residues: ATP-dependent 6-phosphofructokinase (320 aa).

Residue Gly11 coordinates ATP. 21–25 (RAVVR) is an ADP binding site. ATP contacts are provided by residues 72 to 73 (RC) and 102 to 105 (GDGS). Residue Asp103 coordinates Mg(2+). Substrate is bound at residue 125-127 (TID). Asp127 acts as the Proton acceptor in catalysis. Arg154 is an ADP binding site. Substrate is bound by residues Arg162 and 169-171 (MGR). ADP contacts are provided by residues 185-187 (GAE) and 214-216 (KTH). Residues Glu223, Arg244, and 250–253 (HIQR) contribute to the substrate site.

It belongs to the phosphofructokinase type A (PFKA) family. ATP-dependent PFK group I subfamily. Prokaryotic clade 'B1' sub-subfamily. As to quaternary structure, homotetramer. Mg(2+) is required as a cofactor.

The protein localises to the cytoplasm. It carries out the reaction beta-D-fructose 6-phosphate + ATP = beta-D-fructose 1,6-bisphosphate + ADP + H(+). It participates in carbohydrate degradation; glycolysis; D-glyceraldehyde 3-phosphate and glycerone phosphate from D-glucose: step 3/4. With respect to regulation, allosterically activated by ADP and other diphosphonucleosides, and allosterically inhibited by phosphoenolpyruvate. Catalyzes the phosphorylation of D-fructose 6-phosphate to fructose 1,6-bisphosphate by ATP, the first committing step of glycolysis. This is ATP-dependent 6-phosphofructokinase from Clostridium botulinum (strain Alaska E43 / Type E3).